Reading from the N-terminus, the 385-residue chain is Putative F-box protein At1g49610 (385 aa).

Residues 25–73 form the F-box domain; it reads VDSISSLPDVILQENLSLIPTKFAIRTSVLSKRWRHVWSETPSLDFDDC.

The sequence is that of Putative F-box protein At1g49610 from Arabidopsis thaliana (Mouse-ear cress).